A 144-amino-acid polypeptide reads, in one-letter code: Protein D (144 aa).

This is Protein D (D) from Escherichia coli.